A 341-amino-acid polypeptide reads, in one-letter code: Methionine import ATP-binding protein MetN 2 (341 aa).

An ABC transporter domain is found at 2-241 (INLQNVSKIY…PKEEMTKRFV (240 aa)). Position 38 to 45 (38 to 45 (GYSGAGKS)) interacts with ATP.

Belongs to the ABC transporter superfamily. Methionine importer (TC 3.A.1.24) family. In terms of assembly, the complex is composed of two ATP-binding proteins (MetN), two transmembrane proteins (MetI) and a solute-binding protein (MetQ).

It localises to the cell membrane. The enzyme catalyses L-methionine(out) + ATP + H2O = L-methionine(in) + ADP + phosphate + H(+). The catalysed reaction is D-methionine(out) + ATP + H2O = D-methionine(in) + ADP + phosphate + H(+). Its function is as follows. Part of the ABC transporter complex MetNIQ involved in methionine import. Responsible for energy coupling to the transport system. This is Methionine import ATP-binding protein MetN 2 from Bacillus licheniformis (strain ATCC 14580 / DSM 13 / JCM 2505 / CCUG 7422 / NBRC 12200 / NCIMB 9375 / NCTC 10341 / NRRL NRS-1264 / Gibson 46).